The following is a 352-amino-acid chain: Pollen-specific protein SF21 (352 aa).

It belongs to the NDRG family. In terms of tissue distribution, pollen.

This is Pollen-specific protein SF21 (SF21) from Helianthus annuus (Common sunflower).